The following is a 3763-amino-acid chain: Colossin-B (3763 aa).

The first 19 residues, Met1–Ser19, serve as a signal peptide directing secretion. Asn43, Asn110, Asn258, and Asn284 each carry an N-linked (GlcNAc...) asparagine glycan. The Follistatin-like 1 domain occupies Asp619–Ile643. 2 N-linked (GlcNAc...) asparagine glycosylation sites follow: Asn652 and Asn672. 2 Follistatin-like domains span residues His701–Phe724 and Pro729–Phe752. Residues Pro792–Lys832 form a disordered region. The span at Pro810–Pro820 shows a compositional bias: low complexity. Residues Asn845 and Asn991 are each glycosylated (N-linked (GlcNAc...) asparagine). Disordered regions lie at residues Leu1033–Ser1068 and Pro1095–Thr1124. Residues Ser1036–Gly1051 are compositionally biased toward gly residues. Low complexity-rich tracts occupy residues Ser1052–Ser1068 and Pro1099–Thr1124. Asn1054 carries an N-linked (GlcNAc...) asparagine glycan. A CNA-B 1 domain is found at Val1159–Ser1227. Asn1229 and Asn1247 each carry an N-linked (GlcNAc...) asparagine glycan. The CNA-B 2 domain occupies Ile1304 to Ser1373. The N-linked (GlcNAc...) asparagine glycan is linked to Asn1381. CNA-B domains lie at Leu1437–Lys1515, Val1582–Asp1648, and Val1731–Ser1809. 2 N-linked (GlcNAc...) asparagine glycosylation sites follow: Asn1769 and Asn1815. The tract at residues Gly1883–Glu1955 is disordered. Residues Ser1898–Gln1948 show a composition bias toward low complexity. Positions Val2015–Asn2083 constitute a CNA-B 6 domain. N-linked (GlcNAc...) asparagine glycans are attached at residues Asn2128, Asn2145, Asn2243, Asn2294, Asn2351, Asn2378, Asn2453, Asn2493, Asn2496, Asn2516, Asn2572, Asn2601, Asn2624, Asn2668, Asn2698, Asn2714, Asn2781, Asn2787, Asn2800, Asn2838, and Asn2858. The CNA-B 7 domain occupies Phe2143–Tyr2197. The 54-residue stretch at Val2292–Asn2345 folds into the CNA-B 8 domain. In terms of domain architecture, CNA-B 9 spans Asn2453–Phe2477. Residues Val2713–Asp2766 enclose the CNA-B 10 domain. One can recognise a CNA-B 11 domain in the interval Leu2984–Tyr3061. 10 N-linked (GlcNAc...) asparagine glycosylation sites follow: Asn3083, Asn3130, Asn3372, Asn3390, Asn3459, Asn3466, Asn3557, Asn3666, Asn3676, and Asn3681. Residues Tyr3128–Ile3201 form the CNA-B 12 domain. Residues Met3664 to Asn3733 enclose the CNA-B 13 domain.

It belongs to the serine-aspartate repeat-containing protein (SDr) family.

Its subcellular location is the secreted. The sequence is that of Colossin-B (colB) from Dictyostelium discoideum (Social amoeba).